Here is a 734-residue protein sequence, read N- to C-terminus: Photosystem I P700 chlorophyll a apoprotein A2 (734 aa).

The next 8 membrane-spanning stretches (helical) occupy residues 46–69 (IFAS…FHVA), 135–158 (LYTG…LHLE), 175–199 (LNHH…HVAI), 273–291 (IAHH…GHTY), 330–353 (LHFQ…QHMY), 369–395 (AALY…IFLT), 417–439 (AIIS…LYVH), and 517–535 (FPVH…LILS). [4Fe-4S] cluster-binding residues include cysteine 559 and cysteine 568. The next 2 helical transmembrane spans lie at 575–596 (AFYP…HWHW) and 643–665 (LSVW…MFLI). Chlorophyll a is bound by residues histidine 654, methionine 662, and tyrosine 670. A phylloquinone-binding site is contributed by tryptophan 671. A helical membrane pass occupies residues 707 to 727 (LVGLAHFSVGYIFTYAAFPIP).

Belongs to the PsaA/PsaB family. In terms of assembly, the PsaA/B heterodimer binds the P700 chlorophyll special pair and subsequent electron acceptors. PSI consists of a core antenna complex that captures photons, and an electron transfer chain that converts photonic excitation into a charge separation. The eukaryotic PSI reaction center is composed of at least 11 subunits. P700 is a chlorophyll a/chlorophyll a' dimer, A0 is one or more chlorophyll a, A1 is one or both phylloquinones and FX is a shared 4Fe-4S iron-sulfur center. is required as a cofactor.

It localises to the plastid. Its subcellular location is the chloroplast thylakoid membrane. It catalyses the reaction reduced [plastocyanin] + hnu + oxidized [2Fe-2S]-[ferredoxin] = oxidized [plastocyanin] + reduced [2Fe-2S]-[ferredoxin]. Functionally, psaA and PsaB bind P700, the primary electron donor of photosystem I (PSI), as well as the electron acceptors A0, A1 and FX. PSI is a plastocyanin-ferredoxin oxidoreductase, converting photonic excitation into a charge separation, which transfers an electron from the donor P700 chlorophyll pair to the spectroscopically characterized acceptors A0, A1, FX, FA and FB in turn. Oxidized P700 is reduced on the lumenal side of the thylakoid membrane by plastocyanin. The chain is Photosystem I P700 chlorophyll a apoprotein A2 from Selaginella uncinata (Blue spike-moss).